A 149-amino-acid chain; its full sequence is Large ribosomal subunit protein bL9 (149 aa).

The protein belongs to the bacterial ribosomal protein bL9 family.

In terms of biological role, binds to the 23S rRNA. The protein is Large ribosomal subunit protein bL9 of Leptospira borgpetersenii serovar Hardjo-bovis (strain JB197).